The following is a 218-amino-acid chain: 3-oxo-tetronate 4-phosphate decarboxylase (218 aa).

The Proton acceptor role is filled by Glu-86. Positions 86, 105, and 107 each coordinate Zn(2+). Catalysis depends on Tyr-132, which acts as the Proton donor. A Zn(2+)-binding site is contributed by His-172.

This sequence belongs to the aldolase class II family. AraD/FucA subfamily. Requires Zn(2+) as cofactor.

The catalysed reaction is 3-dehydro-4-O-phospho-D-erythronate + H(+) = dihydroxyacetone phosphate + CO2. It catalyses the reaction 3-dehydro-4-O-phospho-L-erythronate + H(+) = dihydroxyacetone phosphate + CO2. Functionally, catalyzes the decarboxylation of 3-oxo-tetronate 4-phosphate to dihydroxyacetone phosphate (DHAP) and CO(2). The protein is 3-oxo-tetronate 4-phosphate decarboxylase of Pectobacterium atrosepticum (strain SCRI 1043 / ATCC BAA-672) (Erwinia carotovora subsp. atroseptica).